A 68-amino-acid chain; its full sequence is Large ribosomal subunit protein bL32 (68 aa).

It belongs to the bacterial ribosomal protein bL32 family.

The sequence is that of Large ribosomal subunit protein bL32 from Cereibacter sphaeroides (strain ATCC 17025 / ATH 2.4.3) (Rhodobacter sphaeroides).